Reading from the N-terminus, the 357-residue chain is Holliday junction branch migration complex subunit RuvB (357 aa).

Residues 1 to 27 (MGRFSNADGPGDDADEREVTPALTVGE) are disordered. The interval 1–195 (MGRFSNADGP…FGFTAHMDFY (195 aa)) is large ATPase domain (RuvB-L). ATP is bound by residues L34, R35, G76, K79, T80, S81, 142–144 (EDF), R185, Y195, and R232. Mg(2+) is bound at residue T80. The small ATPAse domain (RuvB-S) stretch occupies residues 196-266 (EPAELERVLA…IAKYALEVYD (71 aa)). The tract at residues 269 to 357 (ELGLDRLDRA…GGLGQVGLFE (89 aa)) is head domain (RuvB-H). DNA contacts are provided by R324 and R329.

It belongs to the RuvB family. Homohexamer. Forms an RuvA(8)-RuvB(12)-Holliday junction (HJ) complex. HJ DNA is sandwiched between 2 RuvA tetramers; dsDNA enters through RuvA and exits via RuvB. An RuvB hexamer assembles on each DNA strand where it exits the tetramer. Each RuvB hexamer is contacted by two RuvA subunits (via domain III) on 2 adjacent RuvB subunits; this complex drives branch migration. In the full resolvosome a probable DNA-RuvA(4)-RuvB(12)-RuvC(2) complex forms which resolves the HJ.

The protein resides in the cytoplasm. It catalyses the reaction ATP + H2O = ADP + phosphate + H(+). The RuvA-RuvB-RuvC complex processes Holliday junction (HJ) DNA during genetic recombination and DNA repair, while the RuvA-RuvB complex plays an important role in the rescue of blocked DNA replication forks via replication fork reversal (RFR). RuvA specifically binds to HJ cruciform DNA, conferring on it an open structure. The RuvB hexamer acts as an ATP-dependent pump, pulling dsDNA into and through the RuvAB complex. RuvB forms 2 homohexamers on either side of HJ DNA bound by 1 or 2 RuvA tetramers; 4 subunits per hexamer contact DNA at a time. Coordinated motions by a converter formed by DNA-disengaged RuvB subunits stimulates ATP hydrolysis and nucleotide exchange. Immobilization of the converter enables RuvB to convert the ATP-contained energy into a lever motion, pulling 2 nucleotides of DNA out of the RuvA tetramer per ATP hydrolyzed, thus driving DNA branch migration. The RuvB motors rotate together with the DNA substrate, which together with the progressing nucleotide cycle form the mechanistic basis for DNA recombination by continuous HJ branch migration. Branch migration allows RuvC to scan DNA until it finds its consensus sequence, where it cleaves and resolves cruciform DNA. The sequence is that of Holliday junction branch migration complex subunit RuvB from Mycolicibacterium gilvum (strain PYR-GCK) (Mycobacterium gilvum (strain PYR-GCK)).